Reading from the N-terminus, the 210-residue chain is MGQVFLLMPVLLASCFLSQGAAIENQRLFNIAVSRVQHLHLLAQKMFNDFDGTLLPDERRQLNKIFLLDFCISDSIVSPVDKHETQKSSVLKLLHISFRLIESWEYPSQTLIISNSLMVRNANQISEKLSDLKVGINLLITGSQDGVLSLDDNDSQHLPPYGNYYQNLGGEGNVRRNYELLACFKKDMHKVETYLTVAKCRKSLEANCTL.

The signal sequence occupies residues 1-22 (MGQVFLLMPVLLASCFLSQGAA). Residue His38 coordinates Zn(2+). A disulfide bridge connects residues Cys71 and Cys183. Glu192 lines the Zn(2+) pocket. An intrachain disulfide couples Cys200 to Cys208.

Belongs to the somatotropin/prolactin family.

It is found in the secreted. Functionally, growth hormone plays an important role in growth control and is involved in the regulation of several anabolic processes. Implicated as an osmoregulatory substance important for seawater adaptation. This chain is Somatotropin-1 (gh1), found in Oncorhynchus nerka (Sockeye salmon).